Here is a 696-residue protein sequence, read N- to C-terminus: Translation initiation factor IF-2 (696 aa).

The tr-type G domain occupies 187–361; the sequence is ERPPVVTVMG…EMQEIKGIPD (175 aa). Residues 196–203 form a G1 region; sequence GHVDHGKT. 196-203 serves as a coordination point for GTP; sequence GHVDHGKT. Residues 221–225 are G2; the sequence is GITQS. Residues 242–245 are G3; the sequence is DTPG. Residues 242–246 and 296–299 each bind GTP; these read DTPGH and NKID. The G4 stretch occupies residues 296 to 299; that stretch reads NKID. Positions 333-335 are G5; sequence SAK.

Belongs to the TRAFAC class translation factor GTPase superfamily. Classic translation factor GTPase family. IF-2 subfamily.

The protein resides in the cytoplasm. In terms of biological role, one of the essential components for the initiation of protein synthesis. Protects formylmethionyl-tRNA from spontaneous hydrolysis and promotes its binding to the 30S ribosomal subunits. Also involved in the hydrolysis of GTP during the formation of the 70S ribosomal complex. The sequence is that of Translation initiation factor IF-2 from Thermosipho africanus (strain TCF52B).